The following is a 2150-amino-acid chain: A disintegrin and metalloproteinase with thrombospondin motifs gon-1 (2150 aa).

The N-terminal stretch at 1–28 (MRSIGGSFHLLQPVVAALILLVVCLVYA) is a signal peptide. A propeptide spanning residues 29-273 (LQSGSGTISE…VIERKARSRR (245 aa)) is cleaved from the precursor. N-linked (GlcNAc...) asparagine glycans are attached at residues N134, N213, N243, and N248. The 214-residue stretch at 280–493 (HYVEVLVVAD…GQTQCLFDQP (214 aa)) folds into the Peptidase M12B domain. 2 disulfides stabilise this stretch: C402-C488 and C440-C470. Residue H424 participates in Zn(2+) binding. E425 is an active-site residue. The Zn(2+) site is built by H428 and H434. In terms of domain architecture, Disintegrin spans 503 to 587 (FVRDEPGKKY…RLAPESLTKI (85 aa)). Residues 588–643 (DGQWGDWRSWGECSRTCGGGVQKGLRDCDSPKPRNGGKYCVGQRERYRSCNTQECP) form the TSP type-1 1 domain. 3 cysteine pairs are disulfide-bonded: C600–C637, C604–C642, and C615–C627. N842 is a glycosylation site (N-linked (GlcNAc...) asparagine). 11 TSP type-1 domains span residues 943 to 1003 (CSTR…IDCS), 1004 to 1057 (GRKW…RECN), 1060 to 1115 (PCPR…HACT), 1116 to 1165 (WWQF…KPCH), 1168 to 1227 (SCPK…GTCP), 1228 to 1277 (FWRN…QTCH), 1280 to 1339 (PCTS…DTCD), 1352 to 1409 (PPIR…RDCS), 1410 to 1469 (YWKM…EPCP), 1474 to 1524 (HIGS…ELCP), and 1527 to 1585 (TNNS…PPCR). Residues N1139 and N1199 are each glycosylated (N-linked (GlcNAc...) asparagine). Residues N1370 and N1432 are each glycosylated (N-linked (GlcNAc...) asparagine). N1528, N1590, N1606, and N1654 each carry an N-linked (GlcNAc...) asparagine glycan. The segment at 1590-1614 (NKTSSASMTSLSSSNSNTTSSASAS) is disordered. Over residues 1592 to 1614 (TSSASMTSLSSSNSNTTSSASAS) the composition is skewed to low complexity. 5 consecutive TSP type-1 domains span residues 1621 to 1675 (PVVS…VRCR), 1678 to 1736 (HCPR…VACP), 1737 to 1793 (AYRW…DTSN), 1794 to 1866 (CPYE…NPCD), and 1867 to 1924 (SEFK…RNCL). 6 disulfide bridges follow: C1679-C1718, C1690-C1694, C1690-C1730, C1694-C1735, C1705-C1718, and C1730-C1735. N-linked (GlcNAc...) asparagine glycosylation is found at N1828 and N1855. One can recognise a GON domain in the interval 1924–2123 (LPSTCQELKS…RYKGLIFEVN (200 aa)). N-linked (GlcNAc...) asparagine glycosylation is found at N1942, N1960, and N1997.

The cofactor is Zn(2+). Expressed by the gonadal distal tip cells (DTCs). Expressed in muscles, including body wall, vulval and anal depressor muscles. Expressed in motor neurons and in ASI and ASJ neurons.

The protein localises to the secreted. Its subcellular location is the extracellular space. It localises to the extracellular matrix. It is found in the basement membrane. The protein resides in the endoplasmic reticulum. The protein localises to the golgi apparatus. Its function is as follows. Secreted metalloprotease required for distal tip cell (DTC) migration along the body wall basement membranes, a key step that promotes gonad morphogenesis. Probably acts by remodeling the basement membrane during cell migration. Required to restrict presynaptic growth at the neuromuscular junctions (NMJ) in late larval stage and in adult motor neurons, probably by controlling collagen IV emb-9 degradation, a component of the synapse basement membrane. Also involved in the organization of adult muscle morphology. Has a protease-independent function in promoting the transport from the endoplasmic reticulum to the Golgi apparatus of a variety of secretory cargos. Required for the secretion of insulin-like peptide ins-7, daf-28 and ins-18 and TGF beta-like protein daf-7. In peripheral tissues, negatively regulates insulin-mediated daf-16 translocation and thereby negatively regulates lifespan and dauer formation. The polypeptide is A disintegrin and metalloproteinase with thrombospondin motifs gon-1 (Caenorhabditis elegans).